We begin with the raw amino-acid sequence, 135 residues long: Large-conductance mechanosensitive channel (135 aa).

2 consecutive transmembrane segments (helical) span residues 9-29 and 79-99; these read AFAA…GAAF and IQTI…LKAI.

This sequence belongs to the MscL family. Homopentamer.

The protein localises to the cell inner membrane. In terms of biological role, channel that opens in response to stretch forces in the membrane lipid bilayer. May participate in the regulation of osmotic pressure changes within the cell. This Aeromonas salmonicida (strain A449) protein is Large-conductance mechanosensitive channel.